A 362-amino-acid chain; its full sequence is 3-dehydroquinate synthase (362 aa).

NAD(+)-binding positions include D71–K76, G105–D109, T129–T130, K142, K151, and C169–T172. Positions 184, 247, and 264 each coordinate Zn(2+).

This sequence belongs to the sugar phosphate cyclases superfamily. Dehydroquinate synthase family. Co(2+) is required as a cofactor. It depends on Zn(2+) as a cofactor. The cofactor is NAD(+).

It localises to the cytoplasm. The enzyme catalyses 7-phospho-2-dehydro-3-deoxy-D-arabino-heptonate = 3-dehydroquinate + phosphate. Its pathway is metabolic intermediate biosynthesis; chorismate biosynthesis; chorismate from D-erythrose 4-phosphate and phosphoenolpyruvate: step 2/7. Functionally, catalyzes the conversion of 3-deoxy-D-arabino-heptulosonate 7-phosphate (DAHP) to dehydroquinate (DHQ). The polypeptide is 3-dehydroquinate synthase (Cronobacter sakazakii (strain ATCC BAA-894) (Enterobacter sakazakii)).